The sequence spans 167 residues: Translationally-controlled tumor protein homolog (167 aa).

The region spanning 1 to 167 is the TCTP domain; the sequence is MKLFTDIISN…WKDGLRETKI (167 aa).

Belongs to the TCTP family.

It is found in the cytoplasm. It localises to the cytoskeleton. Involved in protein synthesis. Involved in microtubule stabilization. This is Translationally-controlled tumor protein homolog from Mycosarcoma maydis (Corn smut fungus).